We begin with the raw amino-acid sequence, 262 residues long: KTSTRTRCAFEVAARDQGAGATYLEPSASQIGHKESIKDTARVLGRMYDAIEYRGFGQEIVEELAKYAGVPVFNGLTNEFHPTQMLADALTMREHSSKPLNQTAFAYVGDARYNMGNSLLILGAKLGMDVRIGAPESLWPSEGIIAAAHAAAKETGAKITLTENAHEAVKGVGFIHTDVWVSMGEPKEVWQERIDLLKDYRVTPELMAASGNPQVKFMHCLPAFHNRETKVGEWIYETFGLNGVEVTEEVFESPASIVFDQA.

Carbamoyl phosphate-binding positions include 3–7, glutamine 30, arginine 54, and 81–84; these read STRTR and HPTQ. L-ornithine-binding positions include asparagine 114, aspartate 178, and 182-183; that span reads SM. Carbamoyl phosphate-binding positions include 219–222 and threonine 247; that span reads HCLP.

The protein belongs to the aspartate/ornithine carbamoyltransferase superfamily. OTCase family.

The protein localises to the cytoplasm. The enzyme catalyses carbamoyl phosphate + L-ornithine = L-citrulline + phosphate + H(+). Its pathway is amino-acid biosynthesis; L-arginine biosynthesis; L-arginine from L-ornithine and carbamoyl phosphate: step 1/3. Functionally, reversibly catalyzes the transfer of the carbamoyl group from carbamoyl phosphate (CP) to the N(epsilon) atom of ornithine (ORN) to produce L-citrulline. This is Ornithine carbamoyltransferase (argF) from Neisseria polysaccharea.